Consider the following 248-residue polypeptide: ATP synthase delta chain, chloroplastic (248 aa).

The N-terminal 60 residues, 1–60 (MAALQQTPITFQSRSPPPTQIISGPTAKLSFSGGLKLPKLTIKLRSNRTSRRGGGAAGSK), are a transit peptide targeting the chloroplast.

This sequence belongs to the ATPase delta chain family. In terms of assembly, F-type ATPases have 2 components, CF(1) - the catalytic core - and CF(0) - the membrane proton channel. CF(1) has five subunits: alpha(3), beta(3), gamma(1), delta(1), epsilon(1). CF(0) has three main subunits: a, b and c.

It localises to the plastid. The protein resides in the chloroplast thylakoid membrane. This protein seems to be part of the stalk that links CF(0) to CF(1). It either transmits conformational changes from CF(0) into CF(1) or is implicated in proton conduction. In Nicotiana tabacum (Common tobacco), this protein is ATP synthase delta chain, chloroplastic (ATPD).